We begin with the raw amino-acid sequence, 343 residues long: UPF0157 protein YqkA (343 aa).

Residues 8 to 144 enclose the N-acetyltransferase domain; sequence KEATIAREIL…VKAAQGLLLS (137 aa). The tract at residues 135 to 343 is UPF0157; sequence VKAAQGLLLS…ENDENGGFTL (209 aa).

It in the C-terminal section; belongs to the UPF0157 (GrpB) family.

This is UPF0157 protein YqkA (yqkA) from Bacillus subtilis (strain 168).